Here is a 221-residue protein sequence, read N- to C-terminus: Serine/arginine-rich splicing factor 2 (221 aa).

Residues 14–92 (TSLKVDNLTY…RELRVQMARY (79 aa)) enclose the RRM domain. A disordered region spans residues 91 to 221 (RYGRPPDSHH…SPEEEGAVSS (131 aa)). Composition is skewed to basic residues over residues 117–171 (RRSR…RSKS) and 179–189 (SRSRSRSRSRS).

The protein belongs to the splicing factor SR family. In terms of processing, extensively phosphorylated on serine residues in the RS domain.

The protein resides in the nucleus. Its function is as follows. Necessary for the splicing of pre-mRNA. It is required for formation of the earliest ATP-dependent splicing complex and interacts with spliceosomal components bound to both the 5'- and 3'-splice sites during spliceosome assembly. It also is required for ATP-dependent interactions of both U1 and U2 snRNPs with pre-mRNA. In Gallus gallus (Chicken), this protein is Serine/arginine-rich splicing factor 2 (SRSF2).